Reading from the N-terminus, the 415-residue chain is Arrestin red cell isoform 3 (415 aa).

It belongs to the arrestin family.

Its subcellular location is the cytoplasm. This Oncorhynchus mykiss (Rainbow trout) protein is Arrestin red cell isoform 3.